A 101-amino-acid chain; its full sequence is uncharacterized protein (101 aa).

A helical transmembrane segment spans residues 77-99 (VFSFMNGFTDGCICGTIIILCLI).

The protein localises to the membrane. This is an uncharacterized protein from Acanthamoeba polyphaga mimivirus (APMV).